The primary structure comprises 145 residues: D-aminoacyl-tRNA deacylase (145 aa).

The Gly-cisPro motif, important for rejection of L-amino acids signature appears at G137–P138.

The protein belongs to the DTD family. As to quaternary structure, homodimer.

It localises to the cytoplasm. The catalysed reaction is glycyl-tRNA(Ala) + H2O = tRNA(Ala) + glycine + H(+). It catalyses the reaction a D-aminoacyl-tRNA + H2O = a tRNA + a D-alpha-amino acid + H(+). Functionally, an aminoacyl-tRNA editing enzyme that deacylates mischarged D-aminoacyl-tRNAs. Also deacylates mischarged glycyl-tRNA(Ala), protecting cells against glycine mischarging by AlaRS. Acts via tRNA-based rather than protein-based catalysis; rejects L-amino acids rather than detecting D-amino acids in the active site. By recycling D-aminoacyl-tRNA to D-amino acids and free tRNA molecules, this enzyme counteracts the toxicity associated with the formation of D-aminoacyl-tRNA entities in vivo and helps enforce protein L-homochirality. This Lactobacillus helveticus (strain DPC 4571) protein is D-aminoacyl-tRNA deacylase.